The chain runs to 537 residues: MTNTKFVFVTGGVLSSVGKGIAAASMGMLFKARGYKVTAIKMDPYLNVDAGTMSPYQHGEVFVTEDGAETDLDLGHYERFLDENLSGKNNITSGKIYSQVITKERKGDYLGSTVQVIPHVTDAIKESILYGAQGADLAVVEIGGTVGDIESLPFLEAVRQLRRELGPNGSVVVHVTYVPILETTHEAKTKPTQHSVKELRSIGLQPDAIVLRSHTPLEKHVLEKTSLFCDVPLEGVINSYDVESVYDVPLLLEQEKLISVLEERLFGTTTEADLKKWKEMLSRQSERTLKVALVGKYVVLPDAYLSVIEAIRHAAMKLGVAAHVSLMSSDELEKCDDEQLSEKLSNMDALVVPGGFGARGIEGMVKVLRYARENKMPTLGLCLGMQVMSIEFARNVLGLKDANSTEFDPNTTYPVISLLPEQMQVRDLGGSMRLGAYPCTLVEGTRVHALYNKPVVFERHRHRFEFNNEFREAFENNGFQVSGLYEPKDLVEVLELKDHPFYVGVQYHPEFKSRPMVPHPLFLGLLSEAVAKASPVL.

An amidoligase domain region spans residues 1 to 267; sequence MTNTKFVFVT…ISVLEERLFG (267 aa). Residue Ser15 participates in CTP binding. Ser15 contributes to the UTP binding site. An ATP-binding site is contributed by 16-21; it reads SVGKGI. Tyr56 lines the L-glutamine pocket. Asp73 serves as a coordination point for ATP. The Mg(2+) site is built by Asp73 and Glu141. CTP is bound by residues 148-150, 188-193, and Lys224; these read DIE and KTKPTQ. Residues 188-193 and Lys224 contribute to the UTP site; that span reads KTKPTQ. Residues 297–535 form the Glutamine amidotransferase type-1 domain; it reads YVVLPDAYLS…LSEAVAKASP (239 aa). Gly355 contributes to the L-glutamine binding site. Catalysis depends on Cys382, which acts as the Nucleophile; for glutamine hydrolysis. Residues 383–386, Glu406, and Arg463 contribute to the L-glutamine site; that span reads LGMQ. Residues His508 and Glu510 contribute to the active site.

Belongs to the CTP synthase family. As to quaternary structure, homotetramer.

The enzyme catalyses UTP + L-glutamine + ATP + H2O = CTP + L-glutamate + ADP + phosphate + 2 H(+). It carries out the reaction L-glutamine + H2O = L-glutamate + NH4(+). The catalysed reaction is UTP + NH4(+) + ATP = CTP + ADP + phosphate + 2 H(+). It functions in the pathway pyrimidine metabolism; CTP biosynthesis via de novo pathway; CTP from UDP: step 2/2. Its activity is regulated as follows. Allosterically activated by GTP, when glutamine is the substrate; GTP has no effect on the reaction when ammonia is the substrate. The allosteric effector GTP functions by stabilizing the protein conformation that binds the tetrahedral intermediate(s) formed during glutamine hydrolysis. Inhibited by the product CTP, via allosteric rather than competitive inhibition. Catalyzes the ATP-dependent amination of UTP to CTP with either L-glutamine or ammonia as the source of nitrogen. Regulates intracellular CTP levels through interactions with the four ribonucleotide triphosphates. This is CTP synthase from Coprothermobacter proteolyticus (strain ATCC 35245 / DSM 5265 / OCM 4 / BT).